The chain runs to 209 residues: Ribonuclease HII (209 aa).

Residues 18–209 form the RNase H type-2 domain; that stretch reads GLIAGVDEVG…FKPVKALLEG (192 aa). A divalent metal cation is bound by residues Asp-24, Glu-25, and Asp-116.

It belongs to the RNase HII family. The cofactor is Mn(2+). Requires Mg(2+) as cofactor.

Its subcellular location is the cytoplasm. The catalysed reaction is Endonucleolytic cleavage to 5'-phosphomonoester.. Its function is as follows. Endonuclease that specifically degrades the RNA of RNA-DNA hybrids. This Shewanella putrefaciens (strain CN-32 / ATCC BAA-453) protein is Ribonuclease HII.